Consider the following 108-residue polypeptide: Cuticle protein AM1199 (108 aa).

Residue Q1 is modified to Pyrrolidone carboxylic acid. In terms of domain architecture, Chitin-binding type R&amp;R spans 26–91; it reads DGNFGYDFET…AESPLIPTPH (66 aa). A glycan (O-linked (HexNAc) threonine) is linked at T89.

As to expression, arthrodial membrane.

This is Cuticle protein AM1199 from Cancer pagurus (Rock crab).